The following is a 1127-amino-acid chain: Inactive phospholipase C-like protein 2 (1127 aa).

Positions 1–11 are enriched in gly residues; it reads MAECGRGGAAG. A disordered region spans residues 1 to 128; sequence MAECGRGGAA…KKTVSFSSMP (128 aa). N-acetylalanine is present on Ala-2. Ser-17 bears the Phosphoserine mark. Residues 19-31 are compositionally biased toward low complexity; it reads GPALGAKGALKAG. Residues 32–42 are compositionally biased toward gly residues; it reads VGEGGGGGGRL. Residue Thr-84 is modified to Phosphothreonine. The PH domain occupies 141 to 251; it reads NSMVEGSELK…WVTGLRYLIS (111 aa). The 145-residue stretch at 426–570 folds into the PI-PLC X-box domain; it reads QDMKQPLSHY…LKGKILIKAK (145 aa). Thr-584 is modified (phosphothreonine). Positions 618–734 constitute a PI-PLC Y-box domain; it reads LSELVSICKS…GYVLRPAIMR (117 aa). A C2 domain is found at 734–863; it reads REEVSFFSAN…TGYRHVPLQS (130 aa). A disordered region spans residues 1101-1127; the sequence is GTENADVQKPRRSLEVIPEKANDETGE. Residues 1106-1127 are compositionally biased toward basic and acidic residues; the sequence is DVQKPRRSLEVIPEKANDETGE. Ser-1113 carries the post-translational modification Phosphoserine.

Its subcellular location is the cytoplasm. May play an role in the regulation of Ins(1,4,5)P3 around the endoplasmic reticulum. In Homo sapiens (Human), this protein is Inactive phospholipase C-like protein 2 (PLCL2).